Consider the following 359-residue polypeptide: 3-dehydroquinate synthase (359 aa).

NAD(+)-binding positions include 70-75, 105-109, 129-130, Lys142, Lys151, and 169-172; these read DGEQYK, GVIGD, TT, and FYKT. Zn(2+)-binding residues include Glu184, His247, and His264.

The protein belongs to the sugar phosphate cyclases superfamily. Dehydroquinate synthase family. Co(2+) is required as a cofactor. Zn(2+) serves as cofactor. The cofactor is NAD(+).

The protein resides in the cytoplasm. It catalyses the reaction 7-phospho-2-dehydro-3-deoxy-D-arabino-heptonate = 3-dehydroquinate + phosphate. Its pathway is metabolic intermediate biosynthesis; chorismate biosynthesis; chorismate from D-erythrose 4-phosphate and phosphoenolpyruvate: step 2/7. Catalyzes the conversion of 3-deoxy-D-arabino-heptulosonate 7-phosphate (DAHP) to dehydroquinate (DHQ). The sequence is that of 3-dehydroquinate synthase from Francisella tularensis subsp. tularensis (strain WY96-3418).